Consider the following 57-residue polypeptide: COP9 signalosome complex subunit 9 (57 aa).

A Phosphothreonine modification is found at Thr26.

The protein belongs to the CSN9 family. As to quaternary structure, component of the CSN complex, composed of COPS1/GPS1, COPS2, COPS3, COPS4, COPS5, COPS6, COPS7 (COPS7A or COPS7B), COPS8 and COPS9. In the complex, it interacts directly with COPS3, COPS5 and COPS6.

It is found in the nucleus. Its subcellular location is the cytoplasm. The protein resides in the nucleoplasm. Component of the COP9 signalosome complex (CSN), a complex involved in various cellular and developmental processes. The CSN complex is an essential regulator of the ubiquitin (Ubl) conjugation pathway by mediating the deneddylation of the cullin subunits of SCF-type E3 ligase complexes, leading to decrease the Ubl ligase activity of SCF-type complexes such as SCF, CSA or DDB2. The complex is also involved in phosphorylation of p53/TP53, c-jun/JUN, IkappaBalpha/NFKBIA, ITPK1 and IRF8/ICSBP, possibly via its association with CK2 and PKD kinases. CSN-dependent phosphorylation of TP53 and JUN promotes and protects degradation by the Ubl system, respectively. Plays a role in cell proliferation. This is COP9 signalosome complex subunit 9 from Bos taurus (Bovine).